We begin with the raw amino-acid sequence, 730 residues long: MFDIHREELDWGGRTLTLETGKMARQADGSVLATYGDTKVLATVVSAREPKPGQDFFPLTVNYQEKTYAAGRIPGGYFKREGRPSEKETLVSRLIDRPIRPLFPEGYKCDTQVVITVLAHDLENDPDVVAMVAASAALTLSGVPFMGPVGAARVGFIDNEYVLNPTVDEVKESALELVVAGTGDAVLMVESEAKELPEEIMLGAVMFGHRHFQPVIEAIIKLAEKAAKEPRNFQPADVSEVESKVREIAEADLRAAYKIKQKQDRYAAVGAAKSKVKKYYEELALDGTKVPTAQVVSDVLKALEAKIVRWNILDDGIRIDGRDVYTVRPIVSEVGILPRAHGSALFTRGETQALVVATLGTGEDEQFIDSLEGTYKEHFLLHYNFPPFSVGETGRMGSPGRREIGHGKLAWRAIHPMLPAKHEFPYTLRVVSEILESNGSSSMATVCGTSLALMDAGVPLRRPVAGIAMGLILEGEKFAVLSDILGDEDHLGDMDFKVAGTEQGVTSLQMDIKIAGITEEIMKVALTQAKDGRVHILGEMAKALTTARAELGEHAPRIEVMKIAVDKIREVIGSGGKVIREIVEKTGAKINIEDDGTIKIASASGDAIKAAINWIKSIASEPEVGQIYEGTVVKVVDFGAFVNFFGSKDGLVHVSQMANERVAKPSDVVKEGDKVKVKLMGFDERGKTRLSMKVVDQTTGEDLEAKAKAERDAARAAAPAATGDEAGAAE.

Residues Asp-489 and Asp-495 each contribute to the Mg(2+) site. The 60-residue stretch at Pro-556 to Ile-615 folds into the KH domain. An S1 motif domain is found at Gly-625–Lys-693. Residues Gly-700–Glu-730 are disordered. Positions Leu-703–Ala-714 are enriched in basic and acidic residues. Positions Arg-715–Glu-730 are enriched in low complexity.

It belongs to the polyribonucleotide nucleotidyltransferase family. Mg(2+) is required as a cofactor.

The protein localises to the cytoplasm. It carries out the reaction RNA(n+1) + phosphate = RNA(n) + a ribonucleoside 5'-diphosphate. Its function is as follows. Involved in mRNA degradation. Catalyzes the phosphorolysis of single-stranded polyribonucleotides processively in the 3'- to 5'-direction. This is Polyribonucleotide nucleotidyltransferase from Xanthobacter autotrophicus (strain ATCC BAA-1158 / Py2).